Consider the following 1406-residue polypeptide: Sterol 3-beta-glucosyltransferase (1406 aa).

Positions 83–231 (ARFDESSDSD…IHSSHESSTS (149 aa)) are disordered. Over residues 110–128 (GSSNPVNSQTEQRSGSQTS) the composition is skewed to polar residues. Residues 209 to 231 (SAGRSQNSSQESSIHSSHESSTS) show a composition bias toward low complexity. Positions 236 to 286 (RLMEMFDFNKPEKVLVEYACSLLQSMLLQGYMYVTEGHICFYAYLPRKSTV) constitute a GRAM 1 domain. Positions 286-385 (VAIKSGYLHK…WVKALQKVIF (100 aa)) constitute a PH domain. Disordered stretches follow at residues 457–558 (ASGH…AESA) and 576–622 (LDKR…DGKP). Over residues 468–478 (HADRSPRSDRT) the composition is skewed to basic and acidic residues. 2 stretches are compositionally biased toward polar residues: residues 490–499 (GTSQPGNGSA) and 531–548 (SESI…SAVW). The span at 576–587 (LDKRACSDERSG) shows a compositional bias: basic and acidic residues. Positions 730–796 (DRFRAHFALP…KDVENVEKEK (67 aa)) constitute a GRAM 2 domain. 10 residues coordinate UDP-alpha-D-glucose: serine 917, arginine 918, aspartate 920, alanine 1220, histidine 1222, histidine 1235, glycine 1239, threonine 1240, aspartate 1259, and glutamine 1260. The tract at residues 1334 to 1406 (QRSIASSTPF…LTNSIHGAGR (73 aa)) is disordered. Low complexity predominate over residues 1336–1349 (SIASSTPFSPTPSA). Residues 1355 to 1375 (QGDDDVEDSEEWTFVGDDNEM) are compositionally biased toward acidic residues. The segment covering 1376–1387 (DMSRRMRDRAIS) has biased composition (basic and acidic residues). Positions 1397 to 1406 (LTNSIHGAGR) are enriched in polar residues.

This sequence belongs to the glycosyltransferase 28 family.

The protein resides in the cytoplasm. It localises to the preautophagosomal structure membrane. The catalysed reaction is a sterol + UDP-alpha-D-glucose = a sterol 3-beta-D-glucoside + UDP + H(+). It catalyses the reaction ergosterol + UDP-alpha-D-glucose = ergosteryl 3-beta-D-glucoside + UDP + H(+). Sterol glycosyltransferase responsible for the glycosylation of ergosterol to form ergosterol-glucoside. This is Sterol 3-beta-glucosyltransferase from Aspergillus clavatus (strain ATCC 1007 / CBS 513.65 / DSM 816 / NCTC 3887 / NRRL 1 / QM 1276 / 107).